We begin with the raw amino-acid sequence, 426 residues long: Maintenance of mitochondrial morphology protein 1 (426 aa).

Over 1–100 the chain is Lumenal; the sequence is MTDSENESTE…KFSGWSFAQG (100 aa). A helical transmembrane segment spans residues 101 to 121; the sequence is FFVGQLSIVLLFIFFLKFFIF. Topologically, residues 122 to 426 are cytoplasmic; it reads SDEPSKSKNP…NTREEKPTEL (305 aa). One can recognise an SMP-LTD domain in the interval 194–409; the sequence is PAESLDWFNV…EPRFQFVRLP (216 aa).

The protein belongs to the MMM1 family. In terms of assembly, homodimer. Component of the ER-mitochondria encounter structure (ERMES) or MDM complex, composed of MMM1, MDM10, MDM12 and MDM34. An MMM1 homodimer associates with one molecule of MDM12 on each side in a pairwise head-to-tail manner, and the SMP-LTD domains of MMM1 and MDM12 generate a continuous hydrophobic tunnel for phospholipid trafficking.

The protein localises to the endoplasmic reticulum membrane. Its function is as follows. Component of the ERMES/MDM complex, which serves as a molecular tether to connect the endoplasmic reticulum (ER) and mitochondria. Components of this complex are involved in the control of mitochondrial shape and protein biogenesis, and function in nonvesicular lipid trafficking between the ER and mitochondria. The MDM12-MMM1 subcomplex functions in the major beta-barrel assembly pathway that is responsible for biogenesis of all outer membrane beta-barrel proteins, and acts in a late step after the SAM complex. The MDM10-MDM12-MMM1 subcomplex further acts in the TOM40-specific pathway after the action of the MDM12-MMM1 complex. Essential for establishing and maintaining the structure of mitochondria and maintenance of mtDNA nucleoids. This Saccharomyces cerevisiae (strain AWRI1631) (Baker's yeast) protein is Maintenance of mitochondrial morphology protein 1.